A 240-amino-acid polypeptide reads, in one-letter code: Small ribosomal subunit protein uS2 (240 aa).

Belongs to the universal ribosomal protein uS2 family. In terms of assembly, component of the small ribosomal subunit. Mature ribosomes consist of a small (40S) and a large (60S) subunit. The 40S subunit contains about 33 different proteins and 1 molecule of RNA (18S). The 60S subunit contains about 49 different proteins and 3 molecules of RNA (25S, 5.8S and 5S). Interacts with RPS21.

It localises to the cytoplasm. Its function is as follows. Required for the assembly and/or stability of the 40S ribosomal subunit. Required for the processing of the 20S rRNA-precursor to mature 18S rRNA in a late step of the maturation of 40S ribosomal subunits. In Enterocytozoon bieneusi (strain H348) (Microsporidian parasite), this protein is Small ribosomal subunit protein uS2.